We begin with the raw amino-acid sequence, 137 residues long: Small ribosomal subunit protein uS12 (137 aa).

The segment at 1 to 23 (MPTINQLVRKPRKSNATKSKSPA) is disordered. The residue at position 102 (aspartate 102) is a 3-methylthioaspartic acid.

The protein belongs to the universal ribosomal protein uS12 family. In terms of assembly, part of the 30S ribosomal subunit. Contacts proteins S8 and S17. May interact with IF1 in the 30S initiation complex.

With S4 and S5 plays an important role in translational accuracy. In terms of biological role, interacts with and stabilizes bases of the 16S rRNA that are involved in tRNA selection in the A site and with the mRNA backbone. Located at the interface of the 30S and 50S subunits, it traverses the body of the 30S subunit contacting proteins on the other side and probably holding the rRNA structure together. The combined cluster of proteins S8, S12 and S17 appears to hold together the shoulder and platform of the 30S subunit. The polypeptide is Small ribosomal subunit protein uS12 (Leuconostoc citreum (strain KM20)).